A 248-amino-acid chain; its full sequence is ATP synthase subunit a (248 aa).

Transmembrane regions (helical) follow at residues 25 to 45 (IAFT…AVMM), 83 to 103 (FFPL…VGII), 113 to 133 (LIVT…YGLA), 142 to 162 (LFVP…IEVI), 192 to 212 (FIAM…LPLG), and 215 to 235 (IALT…FAIL).

Belongs to the ATPase A chain family. F-type ATPases have 2 components, CF(1) - the catalytic core - and CF(0) - the membrane proton channel. CF(1) has five subunits: alpha(3), beta(3), gamma(1), delta(1), epsilon(1). CF(0) has four main subunits: a, b, b' and c.

Its subcellular location is the cell inner membrane. In terms of biological role, key component of the proton channel; it plays a direct role in the translocation of protons across the membrane. The polypeptide is ATP synthase subunit a (Rhodopseudomonas palustris (strain HaA2)).